The primary structure comprises 688 residues: MEPTRLVRPFEVVSEYQPSGDQPKAIAELAGRITAGETDVVLLGATGTGKSATTAWLVEAVQRPTLVLAHNKTLAAQLANEFRELLPNNAVEYFVSYYDYYQPEAYVPQTDTFIEKDSSINAEVERLRHSTTNSLLSRRDVVVVSTVSCIYGLGAAEEYLEAMVALQVGQNVGRDQLIRRFVAMQYERNDIDFSRGKFRVRGDTIEIIPVYEEHALRIELFGDEIEALYSLHPLTGEVLARTDAVSVFPATHYAASPATIQRAIGTIQTELHDRLVELEREGKLLEAQRLRMRTQFDIEMMEQIGFCSGIENYSRHIDGRAPGEAPHCLLDYFPDDFLVVIDESHVTVPQIGAMYEGDASRKRTLVEHGFRLPSAMDNRPLRWNEFKERVGQTVYLSATPGQYELGIADGVVEQIIRPTGLVDPQILVKPTKGQIDDLLEEIRARAERDERVLVTTLTKKMAEELTDFLAEAGVKVRYLHADVDTLRRVELLTELRSGVFDVLVGINLLREGLDLPEVSLVAILDADKEGFLRSSTSLIQTIGRAARNVSGEVHMYADVLTDSMKKAIEETSRRSELQVEYNRANGIDPQPLRKRIADITDILAREEADTAKILAGRDQKRKSPTPSLRSGGIAAQGAAELESLIADLNAQMLAAAGELKFELAARLRDELSDLKRDLRQMEKAGHLS.

The 384-residue stretch at G31–Q414 folds into the Helicase ATP-binding domain. G44 to S51 is an ATP binding site. A Beta-hairpin motif is present at residues Y97–I120. A Helicase C-terminal domain is found at Q434–T600. A disordered region spans residues L614 to I633. A UVR domain is found at E642–D677.

This sequence belongs to the UvrB family. In terms of assembly, forms a heterotetramer with UvrA during the search for lesions. Interacts with UvrC in an incision complex.

The protein localises to the cytoplasm. Its function is as follows. The UvrABC repair system catalyzes the recognition and processing of DNA lesions. A damage recognition complex composed of 2 UvrA and 2 UvrB subunits scans DNA for abnormalities. Upon binding of the UvrA(2)B(2) complex to a putative damaged site, the DNA wraps around one UvrB monomer. DNA wrap is dependent on ATP binding by UvrB and probably causes local melting of the DNA helix, facilitating insertion of UvrB beta-hairpin between the DNA strands. Then UvrB probes one DNA strand for the presence of a lesion. If a lesion is found the UvrA subunits dissociate and the UvrB-DNA preincision complex is formed. This complex is subsequently bound by UvrC and the second UvrB is released. If no lesion is found, the DNA wraps around the other UvrB subunit that will check the other stand for damage. The sequence is that of UvrABC system protein B from Leifsonia xyli subsp. xyli (strain CTCB07).